A 229-amino-acid chain; its full sequence is PKHD-type hydroxylase BRADO4652 (229 aa).

The Fe2OG dioxygenase domain maps to 78 to 180 (QIFPPLFNRY…RVASFFWMQS (103 aa)). Residues His-98, Asp-100, and His-161 each contribute to the Fe cation site. Arg-171 lines the 2-oxoglutarate pocket.

Fe(2+) is required as a cofactor. The cofactor is L-ascorbate.

This Bradyrhizobium sp. (strain ORS 278) protein is PKHD-type hydroxylase BRADO4652.